An 847-amino-acid polypeptide reads, in one-letter code: Histidine decarboxylase (847 aa).

2 residues coordinate substrate: F80 and H193. N6-(pyridoxal phosphate)lysine is present on K304. Residues 575 to 605 (GNGATRTSTTNSYGHTTSAAQANSERQASIQ) are compositionally biased toward polar residues. Disordered stretches follow at residues 575-662 (GNGA…RSSP), 769-798 (QSQS…MSSL), and 813-847 (SQPM…MESL). Residues 606-616 (EDNEESPEETE) are compositionally biased toward acidic residues. 2 stretches are compositionally biased toward low complexity: residues 634 to 657 (SLST…TQSS) and 769 to 787 (QSQS…LSGG). Positions 832–847 (DSDATVCSTTSSMESL) are enriched in polar residues.

It belongs to the group II decarboxylase family. As to quaternary structure, homodimer. The cofactor is pyridoxal 5'-phosphate. As to expression, localized primarily to the photoreceptors, in the eye.

It carries out the reaction L-histidine + H(+) = histamine + CO2. Its function is as follows. Required in photoreceptor transmitter synthesis. Catlayzes the conversion of L-histidine to histamine. The polypeptide is Histidine decarboxylase (Hdc) (Drosophila melanogaster (Fruit fly)).